Reading from the N-terminus, the 278-residue chain is Probable F-box protein At1g14315 (278 aa).

Positions 1–43 (MQLLPHDTVEDILERVPVKSLLRFKSACKQWKLTIESQYFQAK) constitute an F-box domain.

The polypeptide is Probable F-box protein At1g14315 (Arabidopsis thaliana (Mouse-ear cress)).